Consider the following 299-residue polypeptide: Probable alpha-L-glutamate ligase 2 (299 aa).

In terms of domain architecture, ATP-grasp spans 104–287 (MQLMSRRGIG…VAGAIIEFVE (184 aa)). ATP-binding positions include lysine 141, 178–179 (EY), aspartate 187, and 211–213 (RSN). Mg(2+) contacts are provided by aspartate 248, glutamate 260, and asparagine 262. 3 residues coordinate Mn(2+): aspartate 248, glutamate 260, and asparagine 262.

It belongs to the RimK family. Mg(2+) serves as cofactor. It depends on Mn(2+) as a cofactor.

This Shewanella sp. (strain MR-4) protein is Probable alpha-L-glutamate ligase 2.